The sequence spans 806 residues: Acetyl-CoA decarbonylase/synthase complex subunit alpha 1 (806 aa).

Cysteine 73, cysteine 76, cysteine 77, cysteine 79, cysteine 84, and cysteine 94 together coordinate [4Fe-4S] cluster. Histidine 117 is a CO binding site. [Ni-4Fe-4S] cluster contacts are provided by histidine 250, cysteine 278, and cysteine 323. 4Fe-4S ferredoxin-type domains are found at residues 407-436 and 445-475; these read DEQM…IPEA and YSYL…LSVI. Residues cysteine 417, cysteine 420, cysteine 423, cysteine 427, cysteine 455, cysteine 458, cysteine 461, and cysteine 465 each contribute to the [4Fe-4S] cluster site. Cysteine 523, cysteine 552, and cysteine 587 together coordinate [Ni-4Fe-4S] cluster.

Belongs to the Ni-containing carbon monoxide dehydrogenase family. Heterotetramer of two alpha and two epsilon subunits. The ACDS complex is made up of alpha, epsilon, beta, gamma and delta subunits with a probable stoichiometry of (alpha(2)epsilon(2))(4)-beta(8)-(gamma(1)delta(1))(8). The cofactor is [4Fe-4S] cluster. Requires [Ni-4Fe-4S] cluster as cofactor.

It catalyses the reaction CO + 2 oxidized [2Fe-2S]-[ferredoxin] + H2O = 2 reduced [2Fe-2S]-[ferredoxin] + CO2 + 2 H(+). It functions in the pathway one-carbon metabolism; methanogenesis from acetate. Its function is as follows. Part of the ACDS complex that catalyzes the reversible cleavage of acetyl-CoA, allowing growth on acetate as sole source of carbon and energy. The alpha-epsilon subcomponent functions as a carbon monoxide dehydrogenase. The polypeptide is Acetyl-CoA decarbonylase/synthase complex subunit alpha 1 (Methanosarcina thermophila).